The chain runs to 225 residues: O-methyltransferase rstn1 (225 aa).

2 residues coordinate S-adenosyl-L-methionine: Gln-97 and His-142.

It belongs to the methyltransferase superfamily.

The enzyme catalyses desmethylrestrictinol + S-adenosyl-L-methionine = restrictinol + S-adenosyl-L-homocysteine + H(+). Its pathway is antifungal biosynthesis. In terms of biological role, O-methyltransferase; part of the gene cluster that mediates the biosynthesis of the tetrahydropyranyl antifungal agent restricticin that acts as an inhibitor of CYP51 and blocks the ergosterol biosynthesis. Within the pathway, rstn1 uses S-adenosylmethionine to methylate position C4 of desmethylrestrictinol to produce restrictinol. The highly reducing polyketide synthase rstn3, the short chain dehydrogenase rstn4, the cyclase rstn5, the FAD-dependent monooxygenase rstn6 and the enoylreductase rstn7 are required to generate the first stable intermediate desmethylrestrictinol. Rstn3 with rstn7 biosynthesize the first polyketide chain intermediate that is reduced by rstn4, followed by epoxidation by rstn6 before 6-endo cyclization via epoxide opening by rstn5 leads to desmethylrestrictinol. The methyltransferase rstn1 then catalyzes the C4 O-methylation of desmethylrestrictinol to produce restrictinol, and the nonribosomal peptide synthetase rstn8 catalyzes the C3 esterification of restrictinol with glycine that leads to restricticin. This chain is O-methyltransferase rstn1, found in Aspergillus nomiae NRRL (strain ATCC 15546 / NRRL 13137 / CBS 260.88 / M93).